The following is a 160-amino-acid chain: Cytochrome b6-f complex subunit 4 (160 aa).

3 helical membrane passes run 36–56 (LLYI…GLAV), 95–115 (LLGV…PFLE), and 131–151 (TIFL…ALPI).

It belongs to the cytochrome b family. PetD subfamily. The 4 large subunits of the cytochrome b6-f complex are cytochrome b6, subunit IV (17 kDa polypeptide, petD), cytochrome f and the Rieske protein, while the 4 small subunits are petG, petL, petM and petN. The complex functions as a dimer.

Its subcellular location is the plastid. It localises to the chloroplast thylakoid membrane. Functionally, component of the cytochrome b6-f complex, which mediates electron transfer between photosystem II (PSII) and photosystem I (PSI), cyclic electron flow around PSI, and state transitions. This is Cytochrome b6-f complex subunit 4 from Anthoceros angustus (Hornwort).